A 380-amino-acid chain; its full sequence is Alcohol dehydrogenase 3 (380 aa).

Residues Cys-48, Thr-50, His-70, Cys-100, Cys-103, Cys-106, Cys-114, and Cys-178 each contribute to the Zn(2+) site. 2 residues coordinate an alcohol: Thr-50 and His-70. Position 50 (Thr-50) interacts with NAD(+). NAD(+) contacts are provided by residues 203–208 (GLGAVG), Asp-227, Arg-232, Thr-273, Val-296, 296–298 (VGV), Phe-323, and Arg-373.

It belongs to the zinc-containing alcohol dehydrogenase family. As to quaternary structure, homodimer. Homotetramer. The cofactor is Zn(2+).

Its subcellular location is the cytoplasm. It carries out the reaction a primary alcohol + NAD(+) = an aldehyde + NADH + H(+). The enzyme catalyses a secondary alcohol + NAD(+) = a ketone + NADH + H(+). The sequence is that of Alcohol dehydrogenase 3 (ADH3) from Solanum tuberosum (Potato).